The chain runs to 399 residues: Methylmalonic aciduria type A homolog, mitochondrial (399 aa).

The transit peptide at 1 to 15 (MVVRSLLRVSRLTSA) directs the protein to the mitochondrion. GTP is bound by residues 131–139 (GSPGVGKSS), Asp-274, and 310–312 (SIM).

This sequence belongs to the SIMIBI class G3E GTPase family. ArgK/MeaB subfamily.

It localises to the mitochondrion. May have GTPase activity. May also bind and hydrolyze ATP. May function as chaperone. Likely to have a role in propionyl-CoA and adenosylcobalamin metabolism. The protein is Methylmalonic aciduria type A homolog, mitochondrial (mmaa-1) of Caenorhabditis elegans.